A 234-amino-acid polypeptide reads, in one-letter code: tRNA1(Val) (adenine(37)-N6)-methyltransferase (234 aa).

It belongs to the methyltransferase superfamily. tRNA (adenine-N(6)-)-methyltransferase family.

Its subcellular location is the cytoplasm. The catalysed reaction is adenosine(37) in tRNA1(Val) + S-adenosyl-L-methionine = N(6)-methyladenosine(37) in tRNA1(Val) + S-adenosyl-L-homocysteine + H(+). Functionally, specifically methylates the adenine in position 37 of tRNA(1)(Val) (anticodon cmo5UAC). This chain is tRNA1(Val) (adenine(37)-N6)-methyltransferase, found in Aliivibrio fischeri (strain MJ11) (Vibrio fischeri).